Consider the following 89-residue polypeptide: Small ribosomal subunit protein uS15 (89 aa).

The protein belongs to the universal ribosomal protein uS15 family. In terms of assembly, part of the 30S ribosomal subunit. Forms a bridge to the 50S subunit in the 70S ribosome, contacting the 23S rRNA.

One of the primary rRNA binding proteins, it binds directly to 16S rRNA where it helps nucleate assembly of the platform of the 30S subunit by binding and bridging several RNA helices of the 16S rRNA. Functionally, forms an intersubunit bridge (bridge B4) with the 23S rRNA of the 50S subunit in the ribosome. The polypeptide is Small ribosomal subunit protein uS15 (Cyanothece sp. (strain PCC 7425 / ATCC 29141)).